The chain runs to 2325 residues: Protein Ycf2 (2325 aa).

Disordered regions lie at residues 168-189 (SSQL…GTED), 221-251 (TEIE…EMNN), and 947-1006 (KRKK…KRKE). The segment covering 230 to 240 (KGLSGSSSKSR) has biased composition (low complexity). Composition is skewed to basic and acidic residues over residues 241–250 (LFTEGEKEMN) and 955–1004 (KRKE…PEKR). An ATP-binding site is contributed by 1436-1443 (GSIGSGRS). Disordered stretches follow at residues 1510 to 1529 (YEDR…DYEP), 1855 to 1996 (LVGS…LLRP), and 2063 to 2179 (PAEE…DGFS). A compositionally biased stretch (acidic residues) spans 1861 to 1976 (TEEEVEGTEE…VEGTEDEEGE (116 aa)). Over residues 1977 to 1989 (GTEKDSSQFDNDR) the composition is skewed to basic and acidic residues. 2 stretches are compositionally biased toward acidic residues: residues 2063 to 2080 (PAEE…EALE) and 2087 to 2162 (GEEE…ENDS).

Belongs to the Ycf2 family.

The protein resides in the plastid. Its subcellular location is the chloroplast stroma. Functionally, probable ATPase of unknown function. Its presence in a non-photosynthetic plant (Epifagus virginiana) and experiments in tobacco indicate that it has an essential function which is probably not related to photosynthesis. In Oenothera biennis (German evening primrose), this protein is Protein Ycf2.